The chain runs to 300 residues: tRNA pseudouridine synthase B (300 aa).

Asp38 serves as the catalytic Nucleophile.

It belongs to the pseudouridine synthase TruB family. Type 1 subfamily.

The catalysed reaction is uridine(55) in tRNA = pseudouridine(55) in tRNA. Its function is as follows. Responsible for synthesis of pseudouridine from uracil-55 in the psi GC loop of transfer RNAs. The chain is tRNA pseudouridine synthase B from Dehalococcoides mccartyi (strain ATCC BAA-2100 / JCM 16839 / KCTC 5957 / BAV1).